The chain runs to 433 residues: Putative ankyrin repeat protein R784 (433 aa).

ANK repeat units lie at residues 44–70 (NQNL…KTDV), 71–101 (NGLK…NNDL), 102–131 (LDLH…IVII), 179–205 (FYDS…NQCS), 206–235 (VRQK…RIFS), 237–264 (RRLI…IDLA), 265–294 (QNNF…DIHF), 296–321 (NGEC…NKVY), 322–351 (MSEK…ACMS), and 380–409 (NMRK…KLRE).

The sequence is that of Putative ankyrin repeat protein R784 from Acanthamoeba polyphaga mimivirus (APMV).